Reading from the N-terminus, the 297-residue chain is Calponin-1 (297 aa).

Positions 28–131 (HQREQELREW…STLLALASMA (104 aa)) constitute a Calponin-homology (CH) domain. Calponin-like repeat units follow at residues 164–189 (IGLQ…RHLY), 204–229 (ISLQ…RQIF), and 243–268 (VSLQ…RQVY). Thr-170 bears the Phosphothreonine; by ROCK2 mark. A Phosphoserine; by ROCK2 modification is found at Ser-175. Residues Thr-180 and Thr-184 each carry the phosphothreonine; by ROCK2 modification. Thr-259 carries the post-translational modification Phosphothreonine; by ROCK2.

Belongs to the calponin family.

Its function is as follows. Thin filament-associated protein that is implicated in the regulation and modulation of smooth muscle contraction. It is capable of binding to actin, calmodulin and tropomyosin. The interaction of calponin with actin inhibits the actomyosin Mg-ATPase activity. The polypeptide is Calponin-1 (CNN1) (Bos taurus (Bovine)).